We begin with the raw amino-acid sequence, 126 residues long: 3-aminoacrylate deaminase RutC (126 aa).

It belongs to the RutC family.

It catalyses the reaction (Z)-3-aminoacrylate + H2O + H(+) = 3-oxopropanoate + NH4(+). Involved in pyrimidine catabolism. Catalyzes the deamination of 3-aminoacrylate to malonic semialdehyde, a reaction that can also occur spontaneously. RutC may facilitate the reaction and modulate the metabolic fitness, rather than catalyzing essential functions. This is 3-aminoacrylate deaminase RutC from Acinetobacter baylyi (strain ATCC 33305 / BD413 / ADP1).